The primary structure comprises 143 residues: Hemoglobin cathodic subunit alpha (143 aa).

Ser2 bears the N-acetylserine mark. One can recognise a Globin domain in the interval 2–143 (SLTAKDKSLI…LGAALSDKYR (142 aa)). His60 is an O2 binding site. His89 contributes to the heme b binding site.

Belongs to the globin family. In terms of assembly, heterotetramer of two alpha chains and two beta chains. Red blood cells.

Involved in oxygen transport from gills to the various peripheral tissues. The sequence is that of Hemoglobin cathodic subunit alpha from Anguilla anguilla (European freshwater eel).